The following is a 503-amino-acid chain: Protein FAM124A (503 aa).

Residues 434–470 form a disordered region; that stretch reads LAQSDTVPGRQNHSSDSLHSVSDISSSPCPVFPSTPA. Residues 436–445 show a composition bias toward polar residues; sequence QSDTVPGRQN. Residues 447 to 460 are compositionally biased toward low complexity; it reads SSDSLHSVSDISSS.

The protein belongs to the FAM124 family.

The chain is Protein FAM124A (fam124a) from Xenopus tropicalis (Western clawed frog).